The chain runs to 612 residues: uncharacterized protein (612 aa).

This is an uncharacterized protein from Rickettsia prowazekii (strain Madrid E).